The following is a 274-amino-acid chain: 3-methyl-2-oxobutanoate hydroxymethyltransferase (274 aa).

Residues D50 and D89 each contribute to the Mg(2+) site. Residues 50 to 51, D89, and K119 each bind 3-methyl-2-oxobutanoate; that span reads DS. E121 serves as a coordination point for Mg(2+). The active-site Proton acceptor is the E188.

The protein belongs to the PanB family. Homodecamer; pentamer of dimers. The cofactor is Mg(2+).

The protein resides in the cytoplasm. It catalyses the reaction 3-methyl-2-oxobutanoate + (6R)-5,10-methylene-5,6,7,8-tetrahydrofolate + H2O = 2-dehydropantoate + (6S)-5,6,7,8-tetrahydrofolate. It functions in the pathway cofactor biosynthesis; (R)-pantothenate biosynthesis; (R)-pantoate from 3-methyl-2-oxobutanoate: step 1/2. In terms of biological role, catalyzes the reversible reaction in which hydroxymethyl group from 5,10-methylenetetrahydrofolate is transferred onto alpha-ketoisovalerate to form ketopantoate. The sequence is that of 3-methyl-2-oxobutanoate hydroxymethyltransferase from Methylorubrum populi (strain ATCC BAA-705 / NCIMB 13946 / BJ001) (Methylobacterium populi).